The chain runs to 391 residues: Succinyl-diaminopimelate desuccinylase (391 aa).

His67 serves as a coordination point for Zn(2+). Residue Asp69 is part of the active site. Asp101 contributes to the Zn(2+) binding site. The Proton acceptor role is filled by Glu135. Zn(2+) is bound by residues Glu136, Glu164, and His353.

Belongs to the peptidase M20A family. DapE subfamily. Homodimer. The cofactor is Zn(2+). Requires Co(2+) as cofactor.

The enzyme catalyses N-succinyl-(2S,6S)-2,6-diaminopimelate + H2O = (2S,6S)-2,6-diaminopimelate + succinate. The protein operates within amino-acid biosynthesis; L-lysine biosynthesis via DAP pathway; LL-2,6-diaminopimelate from (S)-tetrahydrodipicolinate (succinylase route): step 3/3. Its function is as follows. Catalyzes the hydrolysis of N-succinyl-L,L-diaminopimelic acid (SDAP), forming succinate and LL-2,6-diaminopimelate (DAP), an intermediate involved in the bacterial biosynthesis of lysine and meso-diaminopimelic acid, an essential component of bacterial cell walls. The polypeptide is Succinyl-diaminopimelate desuccinylase (Rickettsia bellii (strain OSU 85-389)).